Consider the following 92-residue polypeptide: Putative defensin-like protein 251 (92 aa).

A signal peptide spans 1-27 (MRCVTSFVVFCILMFFVLNIFTVEVKA). Cystine bridges form between cysteine 34-cysteine 90, cysteine 45-cysteine 69, cysteine 53-cysteine 82, and cysteine 67-cysteine 84.

It belongs to the DEFL family.

The protein localises to the secreted. The sequence is that of Putative defensin-like protein 251 (SCRL12) from Arabidopsis thaliana (Mouse-ear cress).